We begin with the raw amino-acid sequence, 669 residues long: DNA ligase (669 aa).

Residues 34–38, 83–84, and E114 contribute to the NAD(+) site; these read DAEYD and SL. K116 functions as the N6-AMP-lysine intermediate in the catalytic mechanism. Residues R137, E171, K287, and K311 each coordinate NAD(+). Residues C405, C408, C423, and C428 each coordinate Zn(2+). The BRCT domain occupies 591 to 669; it reads NVESYFAGKT…EERFLQELNK (79 aa).

The protein belongs to the NAD-dependent DNA ligase family. LigA subfamily. Mg(2+) is required as a cofactor. The cofactor is Mn(2+).

The catalysed reaction is NAD(+) + (deoxyribonucleotide)n-3'-hydroxyl + 5'-phospho-(deoxyribonucleotide)m = (deoxyribonucleotide)n+m + AMP + beta-nicotinamide D-nucleotide.. Its function is as follows. DNA ligase that catalyzes the formation of phosphodiester linkages between 5'-phosphoryl and 3'-hydroxyl groups in double-stranded DNA using NAD as a coenzyme and as the energy source for the reaction. It is essential for DNA replication and repair of damaged DNA. This chain is DNA ligase, found in Bacillus cereus (strain AH820).